The following is a 280-amino-acid chain: DNA repair protein XRCC2 (280 aa).

At Ser-10 the chain carries Phosphoserine.

Belongs to the RecA family. RAD51 subfamily. As to quaternary structure, interacts with RAD51D. Part of the BCDX2 complex consisting of RAD51B, RAD51C, RAD51D and XRCC2; the complex has a ring-like structure arranged into a flat disk around a central channel. In the absence of DNA, the BCDX2 subcomplex XRCC2:RAD51D formed a multimeric ring structure; in the presence of single-stranded DNA it formed a filamentous structure with the ssDNA.

The protein localises to the nucleus. It localises to the cytoplasm. The protein resides in the cytoskeleton. It is found in the microtubule organizing center. Its subcellular location is the centrosome. In terms of biological role, involved in the homologous recombination repair (HRR) pathway of double-stranded DNA, thought to repair chromosomal fragmentation, translocations and deletions. Part of the RAD51 paralog protein complex BCDX2 which acts in the BRCA1-BRCA2-dependent HR pathway. Upon DNA damage, BCDX2 acts downstream of BRCA2 recruitment and upstream of RAD51 recruitment. BCDX2 binds predominantly to the intersection of the four duplex arms of the Holliday junction and to junction of replication forks. The BCDX2 complex was originally reported to bind single-stranded DNA, single-stranded gaps in duplex DNA and specifically to nicks in duplex DNA. The polypeptide is DNA repair protein XRCC2 (XRCC2) (Homo sapiens (Human)).